Here is a 161-residue protein sequence, read N- to C-terminus: Allophycocyanin alpha chain (161 aa).

Asn-71 carries the post-translational modification N4-methylasparagine. Residue Cys-81 participates in (2R,3E)-phycocyanobilin binding.

Belongs to the phycobiliprotein family. As to quaternary structure, heterodimer of an alpha and a beta chain. Contains one covalently linked phycocyanobilin chromophore.

It localises to the cellular thylakoid membrane. Functionally, light-harvesting photosynthetic bile pigment-protein from the phycobiliprotein complex. Allophycocyanin has a maximum absorption at approximately 650 nanometers. The chain is Allophycocyanin alpha chain (apcA) from Synechocystis sp. (strain ATCC 27184 / PCC 6803 / Kazusa).